Consider the following 353-residue polypeptide: tRNA-cytidine(32) 2-sulfurtransferase (353 aa).

The short motif at 49 to 54 (SGGKDS) is the PP-loop motif element. The [4Fe-4S] cluster site is built by Cys124, Cys127, and Cys215.

The protein belongs to the TtcA family. Homodimer. Mg(2+) serves as cofactor. The cofactor is [4Fe-4S] cluster.

Its subcellular location is the cytoplasm. It catalyses the reaction cytidine(32) in tRNA + S-sulfanyl-L-cysteinyl-[cysteine desulfurase] + AH2 + ATP = 2-thiocytidine(32) in tRNA + L-cysteinyl-[cysteine desulfurase] + A + AMP + diphosphate + H(+). It participates in tRNA modification. Catalyzes the ATP-dependent 2-thiolation of cytidine in position 32 of tRNA, to form 2-thiocytidine (s(2)C32). The sulfur atoms are provided by the cysteine/cysteine desulfurase (IscS) system. The protein is tRNA-cytidine(32) 2-sulfurtransferase of Sodalis glossinidius (strain morsitans).